The chain runs to 447 residues: MVARRFVVRQGGGGGGGGEAEEHEVEYDTEHGLDILRLQIFSLTSVPPELQKIVVEADGSVVDDGTDLEAISEGLRLVAITGEEEEAEAAAAAEAARAQEKSDEELARMIQAEEEALLLQQYSIRNDGGEEFRERVEPYMHQVLMYEDPMRQEAARKTVPMDELQEKALVSLAKEGNFSPSKDEEDHAFLLQLLFWFKQSFRWVNAPPCDSCGRETFNVGMGTALPSEIKFGANRVEIYRCNYCSSTTRFPRYNDPYKLLETRKGRCGEWANCFTFYCRSFGYEARLILDFTDHVWTECFSNLYGRWMHLDPCEGVYDNPLLYEKGWNKKLDYVIAISKDGVRDVTKRYTRKWHEVLSRRIITSEDTVSAILSSITGKYRSGLSIDGLTALENRDKKESEELSKAAYLEVDTSISLPGRQSGSVEWRKASQKCSTYILSITSGNGCG.

4 residues coordinate Zn(2+): cysteine 209, cysteine 212, cysteine 241, and cysteine 244. Cysteine 267 acts as the Nucleophile in catalysis. Active-site residues include histidine 294 and aspartate 311.

Belongs to the transglutaminase-like superfamily. PNGase family. The cofactor is Zn(2+).

Its subcellular location is the cytoplasm. The enzyme catalyses Hydrolysis of an N(4)-(acetyl-beta-D-glucosaminyl)asparagine residue in which the glucosamine residue may be further glycosylated, to yield a (substituted) N-acetyl-beta-D-glucosaminylamine and a peptide containing an aspartate residue.. In terms of biological role, specifically deglycosylates the denatured form of N-linked glycoproteins in the cytoplasm and assists their proteasome-mediated degradation. Cleaves the beta-aspartyl-glucosamine (GlcNAc) of the glycan and the amide side chain of Asn, converting Asn to Asp. Prefers proteins containing high-mannose over those bearing complex type oligosaccharides. Can recognize misfolded proteins in the endoplasmic reticulum that are exported to the cytosol to be destroyed and deglycosylate them, while it has no activity toward native proteins. Deglycosylation is a prerequisite for subsequent proteasome-mediated degradation of some, but not all, misfolded glycoproteins. This is Peptide-N(4)-(N-acetyl-beta-glucosaminyl)asparagine amidase (PNG1) from Oryza sativa subsp. japonica (Rice).